The chain runs to 351 residues: Flagellar P-ring protein (351 aa).

An N-terminal signal peptide occupies residues 1–20 (MKKILFLFTASLLLHVTLQA).

The protein belongs to the FlgI family. As to quaternary structure, the basal body constitutes a major portion of the flagellar organelle and consists of four rings (L,P,S, and M) mounted on a central rod.

Its subcellular location is the periplasm. The protein resides in the bacterial flagellum basal body. In terms of biological role, assembles around the rod to form the L-ring and probably protects the motor/basal body from shearing forces during rotation. The chain is Flagellar P-ring protein from Sulfurimonas denitrificans (strain ATCC 33889 / DSM 1251) (Thiomicrospira denitrificans (strain ATCC 33889 / DSM 1251)).